A 118-amino-acid polypeptide reads, in one-letter code: Group 1 truncated hemoglobin GlbN (118 aa).

His70 provides a ligand contact to heme.

Belongs to the truncated hemoglobin family. Group I subfamily. In terms of assembly, monomer. It depends on heme as a cofactor.

The protein resides in the membrane. This is Group 1 truncated hemoglobin GlbN (glbN) from Nostoc sp. (strain MUN 8820).